Consider the following 609-residue polypeptide: Zinc metalloproteinase-disintegrin-like VMP-III (609 aa).

The signal sequence occupies residues 1–20 (MIQVLLVTICLAAFPYQGSS). The propeptide occupies 21-189 (IILESGNVND…KKASQLVVTA (169 aa)). The Peptidase M12B domain occupies 198–393 (RFVELFLVVD…HNPECILNEP (196 aa)). Ca(2+) contacts are provided by glutamate 201 and aspartate 285. 3 disulfide bridges follow: cysteine 308–cysteine 388, cysteine 348–cysteine 372, and cysteine 350–cysteine 355. Residue histidine 333 participates in Zn(2+) binding. Glutamate 334 is a catalytic residue. Histidine 337 and histidine 343 together coordinate Zn(2+). Asparagine 371 is a glycosylation site (N-linked (GlcNAc...) asparagine). Ca(2+) contacts are provided by cysteine 388, asparagine 391, valine 403, asparagine 406, leucine 408, glutamate 410, glutamate 413, and aspartate 416. Positions 401–487 (PPVCGNELLE…ECPADVFHKN (87 aa)) constitute a Disintegrin domain. 14 cysteine pairs are disulfide-bonded: cysteine 404–cysteine 433, cysteine 415–cysteine 428, cysteine 417–cysteine 423, cysteine 427–cysteine 450, cysteine 441–cysteine 447, cysteine 446–cysteine 472, cysteine 459–cysteine 479, cysteine 466–cysteine 498, cysteine 491–cysteine 503, cysteine 510–cysteine 560, cysteine 525–cysteine 571, cysteine 538–cysteine 548, cysteine 555–cysteine 597, and cysteine 591–cysteine 602. The short motif at 465–467 (ECD) is the D/ECD-tripeptide element. Residues aspartate 467, proline 468, glutamate 470, aspartate 482, and valine 483 each contribute to the Ca(2+) site.

The protein belongs to the venom metalloproteinase (M12B) family. P-III subfamily. P-IIIa sub-subfamily. As to quaternary structure, monomer. Requires Zn(2+) as cofactor. Expressed by the venom gland.

The protein localises to the secreted. In terms of biological role, snake venom metalloproteinase that impairs hemostasis in the envenomed animal. In Crotalus viridis viridis (Prairie rattlesnake), this protein is Zinc metalloproteinase-disintegrin-like VMP-III.